We begin with the raw amino-acid sequence, 922 residues long: Putative ATP-dependent helicase/translocase YwqA (922 aa).

The Helicase ATP-binding domain maps to 462-625 (LFLRESGFGA…WSIFDFMNKG (164 aa)). 475-482 (DDMGLGKT) lines the ATP pocket. A DEAQ box motif is present at residues 576–579 (DEAQ). A Helicase C-terminal domain is found at 753-907 (KLLELMTAIR…QSENWITELS (155 aa)).

Belongs to the SNF2/RAD54 helicase family. In terms of assembly, interacts with the RNA polymerase core.

In Bacillus subtilis (strain 168), this protein is Putative ATP-dependent helicase/translocase YwqA (ywqA).